A 609-amino-acid chain; its full sequence is N-acetyltransferase ESCO2 (609 aa).

Disordered stretches follow at residues 1-71 (MLSR…RVSP), 100-165 (EAKS…TDQV), 197-241 (KKPT…SPVR), and 314-357 (PDHD…LTAT). 2 stretches are compositionally biased toward polar residues: residues 13-22 (AESNPSKKQI) and 41-54 (ISLNSPQKIPSTPK). Positions 126–135 (PAKKVQKKPR) are enriched in basic residues. Residues 214–230 (PTYEKPSIRKPVREKEL) are compositionally biased toward basic and acidic residues. Polar residues predominate over residues 345-355 (PLNSSTPSALT). Residues 392 to 416 (TTCASCGMLYSTDSPEDNFQHTQFH) form a CCHH-type zinc finger.

It belongs to the acetyltransferase family. ECO subfamily.

It localises to the nucleus. Its subcellular location is the chromosome. The catalysed reaction is L-lysyl-[protein] + acetyl-CoA = N(6)-acetyl-L-lysyl-[protein] + CoA + H(+). Functionally, acetyltransferase required for the establishment of sister chromatid cohesion. Couples the processes of cohesion and DNA replication to ensure that only sister chromatids become paired together. Essential for early development. The sequence is that of N-acetyltransferase ESCO2 (esco2) from Danio rerio (Zebrafish).